Here is a 103-residue protein sequence, read N- to C-terminus: Small ribosomal subunit protein uS10 (103 aa).

Belongs to the universal ribosomal protein uS10 family. Part of the 30S ribosomal subunit.

In terms of biological role, involved in the binding of tRNA to the ribosomes. The sequence is that of Small ribosomal subunit protein uS10 from Hahella chejuensis (strain KCTC 2396).